Consider the following 217-residue polypeptide: uncharacterized protein (217 aa).

It belongs to the IIV-6 309L family.

This is an uncharacterized protein from Acheta domesticus (House cricket).